The following is a 361-amino-acid chain: Geranylgeranyl pyrophosphate synthase 3 (361 aa).

The tract at residues 44-63 (DSNGSKELAPNGAQSRVQKP) is disordered. Isopentenyl diphosphate is bound by residues K81, R84, and H113. Positions 120 and 124 each coordinate Mg(2+). R129 is a dimethylallyl diphosphate binding site. R130 lines the isopentenyl diphosphate pocket. Positions 207, 208, and 244 each coordinate dimethylallyl diphosphate. Residue D247 participates in Mg(2+) binding. 3 residues coordinate dimethylallyl diphosphate: N251, K261, and K271.

Belongs to the FPP/GGPP synthase family. The cofactor is Mg(2+).

The catalysed reaction is isopentenyl diphosphate + dimethylallyl diphosphate = (2E)-geranyl diphosphate + diphosphate. It carries out the reaction isopentenyl diphosphate + (2E)-geranyl diphosphate = (2E,6E)-farnesyl diphosphate + diphosphate. The enzyme catalyses isopentenyl diphosphate + (2E,6E)-farnesyl diphosphate = (2E,6E,10E)-geranylgeranyl diphosphate + diphosphate. Geranylgeranyl pyrophosphate synthase; part of the gene cluster 25 that mediates the biosynthesis of an isoprenoid secondary metabolite. The sequence is that of Geranylgeranyl pyrophosphate synthase 3 (GGS3) from Zymoseptoria tritici (strain CBS 115943 / IPO323) (Speckled leaf blotch fungus).